Reading from the N-terminus, the 119-residue chain is Toxin ICK-11 (119 aa).

A signal peptide spans 1-19 (MMKLYSLVIIATLAAAAFA). 4 cysteine pairs are disulfide-bonded: C59-C74, C67-C80, C71-C116, and C73-C87.

It belongs to the neurotoxin 25 family. ICK-8 subfamily. In terms of tissue distribution, expressed by the venom gland.

The protein localises to the secreted. In terms of biological role, ion channel inhibitor. This chain is Toxin ICK-11, found in Trittame loki (Brush-footed trapdoor spider).